We begin with the raw amino-acid sequence, 355 residues long: MKIRIDIPHHPYDIQIEKGCMAQAGQWLRELWQPQKVVIVTDNHVASLYAEKVKLSLEDAGFQVAVFDFLEGEERKNLTTVQKVYEFLVKQGLTRSDGIVALGGGVVGDLAGFVASTYMRGIHFVQIPTSLTAQVDSSIGGKTGVNTPFAKNMVGTFAQPDGVLIDPLVLETLGKRELIEGMGEVIKYGLIEDPELWALLTGLNGSVESILEHAETLIEHSCQVKRKMVVEDELDNGIRLYLNFGHTIGHAIEATAGYGKVMHGEAVAMGMVQISKVAEEKGLMPAGITQSITEMCQKFGLPVDYENWEVDKLYQALTHDKKARGNTLKLVLVPELGSAIIHPVSLEEMKDYLVK.

NAD(+) is bound by residues 71–76, 105–109, 129–130, Lys-142, and Lys-151; these read EGEERK, GVVGD, and TS. Glu-184, His-246, and His-263 together coordinate Zn(2+).

Belongs to the sugar phosphate cyclases superfamily. Dehydroquinate synthase family. Co(2+) is required as a cofactor. Zn(2+) serves as cofactor. The cofactor is NAD(+).

The protein resides in the cytoplasm. The catalysed reaction is 7-phospho-2-dehydro-3-deoxy-D-arabino-heptonate = 3-dehydroquinate + phosphate. It participates in metabolic intermediate biosynthesis; chorismate biosynthesis; chorismate from D-erythrose 4-phosphate and phosphoenolpyruvate: step 2/7. Catalyzes the conversion of 3-deoxy-D-arabino-heptulosonate 7-phosphate (DAHP) to dehydroquinate (DHQ). This is 3-dehydroquinate synthase from Streptococcus pneumoniae (strain 70585).